The chain runs to 407 residues: Carbamoyl phosphate synthase small chain (407 aa).

The CPSase stretch occupies residues 1–205; sequence MTETTSKTAP…LADGYGEQDT (205 aa). L-glutamine-binding residues include Ser60, Gly257, and Gly259. The 189-residue stretch at 209–397 folds into the Glutamine amidotransferase type-1 domain; sequence HVVALDFGVK…INLIREKKGE (189 aa). Cys286 serves as the catalytic Nucleophile. Residues Leu287, Gln290, Asn328, Gly330, and Phe331 each contribute to the L-glutamine site. Catalysis depends on residues His370 and Glu372.

This sequence belongs to the CarA family. In terms of assembly, composed of two chains; the small (or glutamine) chain promotes the hydrolysis of glutamine to ammonia, which is used by the large (or ammonia) chain to synthesize carbamoyl phosphate. Tetramer of heterodimers (alpha,beta)4.

It catalyses the reaction hydrogencarbonate + L-glutamine + 2 ATP + H2O = carbamoyl phosphate + L-glutamate + 2 ADP + phosphate + 2 H(+). The catalysed reaction is L-glutamine + H2O = L-glutamate + NH4(+). It functions in the pathway amino-acid biosynthesis; L-arginine biosynthesis; carbamoyl phosphate from bicarbonate: step 1/1. Its pathway is pyrimidine metabolism; UMP biosynthesis via de novo pathway; (S)-dihydroorotate from bicarbonate: step 1/3. Functionally, small subunit of the glutamine-dependent carbamoyl phosphate synthetase (CPSase). CPSase catalyzes the formation of carbamoyl phosphate from the ammonia moiety of glutamine, carbonate, and phosphate donated by ATP, constituting the first step of 2 biosynthetic pathways, one leading to arginine and/or urea and the other to pyrimidine nucleotides. The small subunit (glutamine amidotransferase) binds and cleaves glutamine to supply the large subunit with the substrate ammonia. This is Carbamoyl phosphate synthase small chain from Brucella anthropi (strain ATCC 49188 / DSM 6882 / CCUG 24695 / JCM 21032 / LMG 3331 / NBRC 15819 / NCTC 12168 / Alc 37) (Ochrobactrum anthropi).